The following is a 383-amino-acid chain: DNA dC-&gt;dU-editing enzyme APOBEC-3G (383 aa).

Residues 1 to 60 (MKPQFRNTVERMYRDTFFYNFNNRPILSRRNTVWLCYEVKTRGPSMPTWDAKIFRGQVYS) form an essential for cytoplasmic localization region. 2 consecutive CMP/dCMP-type deaminase domains span residues 29 to 138 (RRNT…LRVL) and 214 to 327 (GQHE…LRTL). Thr-32 bears the Phosphothreonine; by PKA mark. The Zn(2+) site is built by His-65, Cys-97, and Cys-100. Positions 209–335 (KPWVSGQHET…TLHRDGAKIA (127 aa)) are necessary for homooligomerization. The interaction with DNA stretch occupies residues 213-215 (SGQ). Thr-218 carries the post-translational modification Phosphothreonine; by PKA and CAMK2. Residue His-257 coordinates Zn(2+). Glu-259 functions as the Proton donor in the catalytic mechanism. Cys-287 and Cys-290 together coordinate Zn(2+). The tract at residues 312–319 (RIYDDQGR) is interaction with DNA.

Belongs to the cytidine and deoxycytidylate deaminase family. In terms of assembly, homodimer. Requires Zn(2+) as cofactor.

The protein resides in the cytoplasm. The protein localises to the nucleus. It localises to the P-body. It carries out the reaction a 2'-deoxycytidine in single-stranded DNA + H2O + H(+) = a 2'-deoxyuridine in single-stranded DNA + NH4(+). In terms of biological role, DNA deaminase (cytidine deaminase) which acts as an inhibitor of retrovirus replication and retrotransposon mobility. After the penetration of retroviral nucleocapsids into target cells of infection and the initiation of reverse transcription, it can induce the conversion of cytosine to uracil in the minus-sense single-strand viral DNA, leading to G-to-A hypermutations in the subsequent plus-strand viral DNA. The resultant detrimental levels of mutations in the proviral genome, along with a deamination-independent mechanism that works prior to the proviral integration, together exert efficient antiretroviral effects in infected target cells. Selectively targets single-stranded DNA and does not deaminate double-stranded DNA or single- or double-stranded RNA. This Papio anubis (Olive baboon) protein is DNA dC-&gt;dU-editing enzyme APOBEC-3G (APOBEC3G).